A 543-amino-acid polypeptide reads, in one-letter code: MLEKGTQSLVNRTIKLRVLGGLTKKLAAPQNESLPELKPQLDVYQKFLENLRAFPTKNKSVPNSPIRYSYYKIANKESEAVNRNLLELFASKKYLPFLASEIPKLPPPYVAAAAPMNPKISVTQLLTDSWCELRSYYDSYACSRAAPSAAMVSGTEQHKSLEDRTHKPEINVTKEIQKNFTPIMMDQLKNFERTLNLISRFIDLLTIGKAREFAVTAIINKETKELIDVNNLQKLAFVHQKSPCYNDQFILASGYLDYLRSESYVNGLEKEKWIQNNYSLNTLLETSIKGPLTVIDVKTRGKPIVTKSKGVLIGHRYQIGLYRKFLGLMSGENVSGINSPISVDQINETAYTLLVTDSVQRGYDVDEPVDPVVGLVMLANNPWIITMLEQICVNDLLGNSLYDTFHAQQSTDYSWDLSQVNPKDFYQVLEPSLLQRTEQLFTKWKRPLSLRSITALISKFYPLISKKLSQNTKIMYYTDGECFHTSNYLYNPKAINTFMEDKVKFLIGQRPPRPIEKSEIPQKCGFCRFQSICEYSNLYNPVT.

Residues 1–26 constitute a mitochondrion transit peptide; it reads MLEKGTQSLVNRTIKLRVLGGLTKKL. The [4Fe-4S] cluster site is built by cysteine 131, cysteine 524, cysteine 527, and cysteine 533.

The protein belongs to the EXO5 family. Monomer. Requires Mg(2+) as cofactor. It depends on [4Fe-4S] cluster as a cofactor.

It is found in the mitochondrion. Single strand DNA specific 5'exonuclease involved in mitochondrial DNA replication and recombination. Releases dinucleotides as main products of catalysis. Has the capacity to slide across 5'double-stranded DNA or 5'RNA sequences and resumes cutting two nucleotides downstream of the double-stranded-to-single-stranded junction or RNA-to-DNA junction, respectively. This Komagataella phaffii (strain GS115 / ATCC 20864) (Yeast) protein is Exonuclease V, mitochondrial (EXO5).